The following is a 57-amino-acid chain: MLGWVITFLVVALIAGILGFGGIAGASIEIAKIIFFIAVVLFLVSAVVGLARGRNRV.

2 helical membrane passes run 4–24 (WVIT…GGIA) and 30–50 (IAKI…VVGL).

Belongs to the UPF0391 family.

The protein localises to the cell membrane. This is UPF0391 membrane protein RPC_3278 from Rhodopseudomonas palustris (strain BisB18).